Here is a 141-residue protein sequence, read N- to C-terminus: Large-conductance mechanosensitive channel (141 aa).

3 helical membrane passes run 14–34 (VVDL…VNSL), 38–58 (VIMP…YYIP), and 82–102 (GQFL…FMVI).

It belongs to the MscL family. Homopentamer.

It localises to the cell inner membrane. In terms of biological role, channel that opens in response to stretch forces in the membrane lipid bilayer. May participate in the regulation of osmotic pressure changes within the cell. The chain is Large-conductance mechanosensitive channel from Methylorubrum extorquens (strain CM4 / NCIMB 13688) (Methylobacterium extorquens).